The sequence spans 466 residues: 3-isopropylmalate dehydratase large subunit (466 aa).

3 residues coordinate [4Fe-4S] cluster: Cys347, Cys407, and Cys410.

This sequence belongs to the aconitase/IPM isomerase family. LeuC type 1 subfamily. Heterodimer of LeuC and LeuD. [4Fe-4S] cluster serves as cofactor.

The catalysed reaction is (2R,3S)-3-isopropylmalate = (2S)-2-isopropylmalate. It participates in amino-acid biosynthesis; L-leucine biosynthesis; L-leucine from 3-methyl-2-oxobutanoate: step 2/4. Functionally, catalyzes the isomerization between 2-isopropylmalate and 3-isopropylmalate, via the formation of 2-isopropylmaleate. The polypeptide is 3-isopropylmalate dehydratase large subunit (Shewanella woodyi (strain ATCC 51908 / MS32)).